We begin with the raw amino-acid sequence, 424 residues long: UDP-N-acetylglucosamine 1-carboxyvinyltransferase (424 aa).

22–23 (KN) lines the phosphoenolpyruvate pocket. Arg93 contributes to the UDP-N-acetyl-alpha-D-glucosamine binding site. Cys117 (proton donor) is an active-site residue. Cys117 is modified (2-(S-cysteinyl)pyruvic acid O-phosphothioketal). UDP-N-acetyl-alpha-D-glucosamine-binding positions include 122–126 (RPVDL), 162–165 (KVSV), Asp307, and Ile329.

It belongs to the EPSP synthase family. MurA subfamily.

Its subcellular location is the cytoplasm. It carries out the reaction phosphoenolpyruvate + UDP-N-acetyl-alpha-D-glucosamine = UDP-N-acetyl-3-O-(1-carboxyvinyl)-alpha-D-glucosamine + phosphate. Its pathway is cell wall biogenesis; peptidoglycan biosynthesis. Functionally, cell wall formation. Adds enolpyruvyl to UDP-N-acetylglucosamine. The protein is UDP-N-acetylglucosamine 1-carboxyvinyltransferase of Haemophilus influenzae (strain PittEE).